A 525-amino-acid chain; its full sequence is Glutamate--cysteine ligase (525 aa).

Belongs to the glutamate--cysteine ligase type 1 family. Type 1 subfamily.

It carries out the reaction L-cysteine + L-glutamate + ATP = gamma-L-glutamyl-L-cysteine + ADP + phosphate + H(+). It functions in the pathway sulfur metabolism; glutathione biosynthesis; glutathione from L-cysteine and L-glutamate: step 1/2. This Alcanivorax borkumensis (strain ATCC 700651 / DSM 11573 / NCIMB 13689 / SK2) protein is Glutamate--cysteine ligase.